The following is a 246-amino-acid chain: uncharacterized protein (246 aa).

The first 24 residues, 1–24, serve as a signal peptide directing secretion; the sequence is MGAPLRHCLLVAAALSLGCGVAAA. Helical transmembrane passes span 71–91 and 104–124; these read YYLG…IGLV and FTCA…AGGA.

It localises to the cell membrane. This is an uncharacterized protein from Mycobacterium tuberculosis (strain ATCC 25618 / H37Rv).